The primary structure comprises 260 residues: Neurotrophin-3 (260 aa).

An N-terminal signal peptide occupies residues 1–18 (MSILFYVMFLPYLCGIHA). Positions 19-141 (TNMDKRNLPE…VNNRTSRRKR (123 aa)) are excised as a propeptide. Asparagine 134 carries N-linked (GlcNAc...) asparagine glycosylation. 3 cysteine pairs are disulfide-bonded: cysteine 155–cysteine 220, cysteine 198–cysteine 249, and cysteine 208–cysteine 251.

This sequence belongs to the NGF-beta family.

The protein resides in the secreted. Its function is as follows. Seems to promote the survival of visceral and proprioceptive sensory neurons. The sequence is that of Neurotrophin-3 (ntf3) from Xenopus laevis (African clawed frog).